Consider the following 234-residue polypeptide: tRNA (guanine-N(1)-)-methyltransferase (234 aa).

S-adenosyl-L-methionine contacts are provided by residues Gly110 and 134-139 (IGDYVL).

The protein belongs to the RNA methyltransferase TrmD family. In terms of assembly, homodimer.

It localises to the cytoplasm. The enzyme catalyses guanosine(37) in tRNA + S-adenosyl-L-methionine = N(1)-methylguanosine(37) in tRNA + S-adenosyl-L-homocysteine + H(+). Functionally, specifically methylates guanosine-37 in various tRNAs. The sequence is that of tRNA (guanine-N(1)-)-methyltransferase from Tropheryma whipplei (strain Twist) (Whipple's bacillus).